The chain runs to 234 residues: Thymidine kinase, cytosolic (234 aa).

At Ser-13 the chain carries Phosphoserine. Residues 26–33, 58–60, and 97–100 contribute to the ATP site; these read GPMFSGKS, DTR, and DEGQ. The active-site Proton acceptor is the Glu-98. Position 128 (Phe-128) interacts with substrate. Zn(2+) contacts are provided by Cys-153 and Cys-156. Residues 172–176 and Tyr-181 each bind substrate; that span reads VEVIG. Zn(2+) contacts are provided by Cys-185 and Cys-188. A KEN box motif is present at residues 203–205; sequence KEN.

The protein belongs to the thymidine kinase family. Homotetramer. Tetramerization from dimerization is induced by ATP and increases catalytic efficiency due to a high affinity for thymidine. Tetramerization is inhibited by phosphorylation at Ser-13. Interacts (via the KEN box) with FZR1. Post-translationally, phosphorylated on Ser-13 in mitosis. Phosphorylation of Ser-13 by CDK1 during mitosis reduces homotetramerization and catalytic efficiency when DNA replication is complete and intracellular TK1 is still present at a high level. In terms of processing, polyubiquitinated. Postmitosis, ubiquitination leads to proteasomal degradation. The KEN box sequence located at the C-terminal region targets for degradation by the anaphase promoting complex (APC/C) activated and rate-limited by FZR1.

It localises to the cytoplasm. The enzyme catalyses thymidine + ATP = dTMP + ADP + H(+). Cell-cycle-regulated enzyme of importance in nucleotide metabolism. Catalyzes the first enzymatic step in the salvage pathway converting thymidine into thymidine monophosphate. Transcriptional regulation limits expression to the S phase of the cell cycle and transient expression coincides with the oscillation in the intracellular dTTP concentration. This Cricetulus griseus (Chinese hamster) protein is Thymidine kinase, cytosolic (TK1).